The primary structure comprises 376 residues: Probable sister chromatid cohesion protein DCC1 (376 aa).

Residues 213-232 form a disordered region; that stretch reads QKSPTNSGGGGEEIKGGGGD. Residues 219-232 are compositionally biased toward gly residues; that stretch reads SGGGGEEIKGGGGD.

It belongs to the DCC1 family.

The protein resides in the nucleus. Its function is as follows. Loads PCNA onto primed templates regulating velocity, spacing and restart activity of replication forks. May couple DNA replication to sister chromatid cohesion. The sequence is that of Probable sister chromatid cohesion protein DCC1 from Dictyostelium discoideum (Social amoeba).